The following is a 57-amino-acid chain: Preprotein translocase subunit SecG (57 aa).

The Cytoplasmic portion of the chain corresponds to 1-33 (MPSSKKKKENVPVMSMAGLIRYYEEEHEKYKVD). Residues 34–55 (PIYVIIASIVLVAVVVAVTKII) form a helical membrane-spanning segment. The Extracellular segment spans residues 56 to 57 (PP).

The protein belongs to the SEC61-beta family. In terms of assembly, component of the protein translocase complex. Heterotrimer consisting of alpha (SecY), beta (SecG) and gamma (SecE) subunits. Can form oligomers of the heterotrimer.

Its subcellular location is the cell membrane. Involved in protein export. The function of the beta subunit is unknown, but it may be involved in stabilization of the trimeric complex. In Metallosphaera sedula (strain ATCC 51363 / DSM 5348 / JCM 9185 / NBRC 15509 / TH2), this protein is Preprotein translocase subunit SecG.